The sequence spans 568 residues: Urease subunit alpha (568 aa).

A Urease domain is found at Gly131–Phe568. Ni(2+) contacts are provided by His136, His138, and Lys219. At Lys219 the chain carries N6-carboxylysine. His221 contributes to the substrate binding site. Positions 248 and 274 each coordinate Ni(2+). Catalysis depends on His322, which acts as the Proton donor. A Ni(2+)-binding site is contributed by Asp362.

This sequence belongs to the metallo-dependent hydrolases superfamily. Urease alpha subunit family. In terms of assembly, heterotrimer of UreA (gamma), UreB (beta) and UreC (alpha) subunits. Three heterotrimers associate to form the active enzyme. Requires Ni cation as cofactor. Post-translationally, carboxylation allows a single lysine to coordinate two nickel ions.

The protein localises to the cytoplasm. It catalyses the reaction urea + 2 H2O + H(+) = hydrogencarbonate + 2 NH4(+). It functions in the pathway nitrogen metabolism; urea degradation; CO(2) and NH(3) from urea (urease route): step 1/1. In Nostoc sp. (strain PCC 7120 / SAG 25.82 / UTEX 2576), this protein is Urease subunit alpha.